Here is a 271-residue protein sequence, read N- to C-terminus: Endonuclease V (271 aa).

The segment at 46–67 is disordered; it reads TRTGDAPDVDQTTLSTSADDRT. Positions 76 and 140 each coordinate Mg(2+).

This sequence belongs to the endonuclease V family. Mg(2+) serves as cofactor.

The protein localises to the cytoplasm. It catalyses the reaction Endonucleolytic cleavage at apurinic or apyrimidinic sites to products with a 5'-phosphate.. Functionally, DNA repair enzyme involved in the repair of deaminated bases. Selectively cleaves double-stranded DNA at the second phosphodiester bond 3' to a deoxyinosine leaving behind the intact lesion on the nicked DNA. The polypeptide is Endonuclease V (Haloarcula marismortui (strain ATCC 43049 / DSM 3752 / JCM 8966 / VKM B-1809) (Halobacterium marismortui)).